A 35-amino-acid chain; its full sequence is Anti-H(O) lectin 3 (35 aa).

It belongs to the leguminous lectin family. In terms of assembly, homodimer. Post-translationally, highly glycosylated.

In terms of biological role, binds lactose or galactose. The polypeptide is Anti-H(O) lectin 3 (Ulex europaeus (Furze)).